The chain runs to 610 residues: Probable pleckstrin homology domain-containing family N member 1 (610 aa).

Residues 1–30 (MGNSHCVPQAPRRLRASFSRKPSLKGNRED) are disordered. Gly-2 carries N-myristoyl glycine lipidation. Residues 61-100 (TDIPGPEHHPENLEQPFLSVFKKGWRRTPVRNLGKVVHYS) form an interaction with C1QBP region. 2 consecutive PH domains span residues 96–192 (VVHY…MALL) and 227–324 (AICA…SRRD). Phosphotyrosine is present on Tyr-307. Disordered stretches follow at residues 327–357 (HLPP…SNGR), 371–431 (QSLP…PLPL), 443–473 (LDSG…ATSR), and 493–610 (PGPD…IQWI). 2 stretches are compositionally biased toward polar residues: residues 371 to 380 (QSLPESSVPT) and 391 to 402 (NQTDSNCVSTGQ). Tyr-462 is modified (phosphotyrosine). Over residues 504–526 (VSVSVPVSESSSGISSSPGPLGS) the composition is skewed to low complexity.

In terms of assembly, found in a complex with cytochrome c mRNA and various ribosomal proteins. Interacts with C1QBP, ELAVL1 and BID. Post-translationally, phosphorylation is essential for its mitochondrial localization and regulates its interaction with C1QBP. In terms of tissue distribution, testis and adipose tissue (at protein level). Ubiquitous.

Its subcellular location is the cell membrane. The protein resides in the mitochondrion membrane. The protein localises to the mitochondrion. Controls the stability of the leptin mRNA harboring an AU-rich element (ARE) in its 3' UTR, in cooperation with the RNA stabilizer ELAVL1. Decreases the stability of the leptin mRNA by antagonizing the function of ELAVL1 by inducing its atypical recruitment from the nucleus to the cytosol. Binds to cardiolipin (CL), phosphatidic acid (PA), phosphatidylinositol 4-phosphate (PtdIns(4)P) and phosphatidylserine (PS). This Mus musculus (Mouse) protein is Probable pleckstrin homology domain-containing family N member 1 (Plekhn1).